Reading from the N-terminus, the 508-residue chain is Maturase K (508 aa).

The protein belongs to the intron maturase 2 family. MatK subfamily.

Its subcellular location is the plastid. It is found in the chloroplast. Functionally, usually encoded in the trnK tRNA gene intron. Probably assists in splicing its own and other chloroplast group II introns. The protein is Maturase K of Lupinus cosentinii (West Australian blue lupine).